A 718-amino-acid chain; its full sequence is Serine/threonine-protein kinase tousled-like 2 (718 aa).

Positions Gly24 to Ser85 are disordered. Residues Pro29 to Ser44 are compositionally biased toward polar residues. Residues Ser46–Arg61 are compositionally biased toward basic and acidic residues. Phosphoserine occurs at positions 73, 94, 99, and 102. The tract at residues Gln147–Thr176 is disordered. Positions Asn193–Glu244 are required for interaction with TLK1 and DYNLL1/LC8. Coiled-coil stretches lie at residues Asn193–Glu244, Ala285–Pro315, and His349–Gln397. The segment at Leu310–Gly337 is disordered. Residues Tyr408 to Leu687 form the Protein kinase domain. ATP is bound by residues Leu414 to Val422 and Lys437. Asp538 (proton acceptor) is an active-site residue. The residue at position 696 (Ser696) is a Phosphoserine; by CHEK1.

Belongs to the protein kinase superfamily. Ser/Thr protein kinase family. In terms of assembly, monomer. May form homodimers; homodimerization may enhance autophosphoylation and enzymatic activity. Heterodimer with TLK1. Interacts with YWHAZ; association with 14-3-3 proteins such as YWHAZ regulates subcellular location. May also interact with FEZ1/LZTS1 and FEZ2. Interacts with CHD7 and CHD8. Interacts with DYNLL1/LC8. Mg(2+) is required as a cofactor. In terms of processing, phosphorylated at Ser-696, probably by CHEK1. Post-translationally, autophosphorylated; phosphorylation promotes the assembly of higher order oligomers and enzymatic activity. In terms of tissue distribution, ubiquitously expressed in all tissues examined, with high levels in heart and testis, in particular the pachytene spermatocytes and in round spermatids. Some evidence for the existence of a testis-specific isoform suggesting a role in spermatogenesis.

The protein resides in the nucleus. The protein localises to the nucleoplasm. It is found in the cytoplasm. Its subcellular location is the perinuclear region. It localises to the cytoskeleton. It carries out the reaction L-seryl-[protein] + ATP = O-phospho-L-seryl-[protein] + ADP + H(+). It catalyses the reaction L-threonyl-[protein] + ATP = O-phospho-L-threonyl-[protein] + ADP + H(+). Its activity is regulated as follows. Cell cycle-regulated, with maximal activity in the S-phase. Rapidly and transiently inhibited by phosphorylation following the generation of DNA double-stranded breaks during S-phase, probably by CHEK1, possibly at Ser-696. This inhibition is cell cycle checkpoint- and ATM-dependent. Its function is as follows. Serine/threonine-protein kinase involved in the process of chromatin assembly and probably also DNA replication, transcription, repair, and chromosome segregation. Phosphorylates the chromatin assembly factors ASF1A and ASF1B. Phosphorylation of ASF1A prevents its proteasome-mediated degradation, thereby enhancing chromatin assembly. Negative regulator of amino acid starvation-induced autophagy. Testis-specific isoforms may play a role in spermatogenesis. Highly expressed in embryos throughout development. This is Serine/threonine-protein kinase tousled-like 2 (Tlk2) from Mus musculus (Mouse).